The following is a 199-amino-acid chain: Peptidyl-tRNA hydrolase (199 aa).

Residue Y18 participates in tRNA binding. H23 functions as the Proton acceptor in the catalytic mechanism. The tRNA site is built by Y72, N74, and N120.

It belongs to the PTH family. As to quaternary structure, monomer.

It localises to the cytoplasm. It catalyses the reaction an N-acyl-L-alpha-aminoacyl-tRNA + H2O = an N-acyl-L-amino acid + a tRNA + H(+). Hydrolyzes ribosome-free peptidyl-tRNAs (with 1 or more amino acids incorporated), which drop off the ribosome during protein synthesis, or as a result of ribosome stalling. In terms of biological role, catalyzes the release of premature peptidyl moieties from peptidyl-tRNA molecules trapped in stalled 50S ribosomal subunits, and thus maintains levels of free tRNAs and 50S ribosomes. In Bifidobacterium adolescentis (strain ATCC 15703 / DSM 20083 / NCTC 11814 / E194a), this protein is Peptidyl-tRNA hydrolase.